We begin with the raw amino-acid sequence, 64 residues long: Conotoxin Ca5.3 (64 aa).

An N-terminal signal peptide occupies residues 1-22 (MRCVPVFIILLLLIASAPGVDA). The propeptide occupies 23–48 (QPKTKYNAPLTSLHDNAKGILQEHWN). Ile-61 is modified (isoleucine amide).

It belongs to the conotoxin T superfamily. Contains 2 disulfide bonds that can be either 'C1-C3, C2-C4' or 'C1-C4, C2-C3', since these disulfide connectivities have been observed for conotoxins with cysteine framework V (for examples, see AC P0DQQ7 and AC P81755). As to expression, expressed by the venom duct.

It localises to the secreted. The sequence is that of Conotoxin Ca5.3 from Conus caracteristicus (Characteristic cone).